The chain runs to 1390 residues: MKDLLKFLKQQNKTEEFDAIRIGLASPDMVRSWSYGEVKKPETINYRTFKPERDGLFCARIFGPVKDYECLCGKYKRLKHRGVICEKCGVEVTLTKVRRDRMGHIDLASPVAHIWFLKSLPSRIGLMLDMTLRDIERVLYFESFVVTEPGMTTLERGQLLGEEEYLDALEEHGDEFEAKMGAEAVLDLLRELDLAQLIAEMREELPTINSETKRKKITKRLKLMESFHQSGNNPEWMIMTVLPVLPPDLRPLVPLDGGRFATSDLNDLYRRVINRNNRLKRLLDLAAPDIIVRNEKRMLQEAVDALLDNGRRGRAITGSNKRPLKSLADMIKGKQGRFRQNLLGKRVDYSGRSVITVGPTLKLHQCGLPKKMALELFKPFIYGKLERRGMATTIKAAKKMVEREMPEVWDVLDEVIREHPVLLNRAPTLHRLGIQAFEPVLIEGKAIHLHPLVCAAYNADFDGDQMAVHVPLTIEAQLEARALMMSTNNILSPANGEPIIVPSQDVVLGLYYMTRDRINAKGEGAIFKDPKEAEKAYRSGNADLHAIVKVRISQSVKNENGVVEDTITVIDTTVGRAILSLILPKGMPYESINQPLGKKQISGLINECYRRLGLKDTVMFADQIMYTGFHYAMKSGVSIGIDDLVIPPVKAQIIESAEAEVTEINQQFQSGLVTAGEKYNKVIDIWSRVNENLSREMMSNLSKDTVINAQGEEVEQASFNSVFMMADSGARGSAAQIRQLAGMRGLMARPDGSIIETPITANFREGLNVLQYFISTHGARKGLADTALKTANSGYLTRRLVDVAQDLVINEDDCGTEDGLTMKPLIEGGDVVEALRERVLGRVVAEDIVIPGTNTVLVERNIMLDEKLCDLLEEHSVDEVRVRSVITCDNDFGVCANCYGRDLARGHIINAGESVGVIAAQSIGEPGTQLTMRTFHIGGAASRASAENNVQVKTNGTLKLHNAKYVLNTDGKIAIISRSTEITIIDSYGREKERYKVPYGAVLTVQDNAEVQGNDIVATWDPHSHPIVLEHKSKVSFSDIDDSNTETQTDELTGLTRIVVKDLSKANAKEPKLIIESEERGLQETRLPSFTTIEVVDGTTVNPGDVLARIPQEGSKTRDITGGLPRVADLFEARKPKEPAILAEVTGTISFGKETKGKKRLVITPDEGDHYEEMIPKWRQLNVFEGERVSKGEVIADGPESPHDILRLRGVTHVANYIVNEVQEVYRLQGVKINDKHIETIIRQMLRKCTIMHGGDTDFLAGEQIEVARVNIANRDLEAQGKIPAKFEIQLMGITKASLATESFISAASFQETTRVLTDAAVNGKSDELRGLKENVIVGRLIPAGTGFSYHQERMARRKQRNVVEEQTVSAEEATQALTDALNADLSGNQ.

Zn(2+) contacts are provided by C70, C72, C85, and C88. Positions 460, 462, and 464 each coordinate Mg(2+). Zn(2+)-binding residues include C814, C888, C895, and C898.

Belongs to the RNA polymerase beta' chain family. As to quaternary structure, the RNAP catalytic core consists of 2 alpha, 1 beta, 1 beta' and 1 omega subunit. When a sigma factor is associated with the core the holoenzyme is formed, which can initiate transcription. Requires Mg(2+) as cofactor. The cofactor is Zn(2+).

The enzyme catalyses RNA(n) + a ribonucleoside 5'-triphosphate = RNA(n+1) + diphosphate. In terms of biological role, DNA-dependent RNA polymerase catalyzes the transcription of DNA into RNA using the four ribonucleoside triphosphates as substrates. The polypeptide is DNA-directed RNA polymerase subunit beta' (Pseudoalteromonas translucida (strain TAC 125)).